The following is a 396-amino-acid chain: Phosphoglycerate kinase (396 aa).

Substrate contacts are provided by residues 21–23 (DFN), R36, 59–62 (HLGK), R119, and R156. ATP is bound by residues K206, E325, and 352–355 (GGDS).

This sequence belongs to the phosphoglycerate kinase family. In terms of assembly, monomer.

The protein resides in the cytoplasm. The catalysed reaction is (2R)-3-phosphoglycerate + ATP = (2R)-3-phospho-glyceroyl phosphate + ADP. The protein operates within carbohydrate degradation; glycolysis; pyruvate from D-glyceraldehyde 3-phosphate: step 2/5. This Staphylococcus epidermidis (strain ATCC 35984 / DSM 28319 / BCRC 17069 / CCUG 31568 / BM 3577 / RP62A) protein is Phosphoglycerate kinase.